Reading from the N-terminus, the 298-residue chain is Mimecan (298 aa).

Residues 1 to 19 form the signal peptide; sequence METVHSTFLLLLFVPLTQQ. Asparagine 88 carries an N-linked (GlcNAc...) (keratan sulfate) asparagine glycan. LRR repeat units lie at residues 112–131, 132–155, 156–179, 180–199, 200–225, 226–246, and 247–277; these read DAVP…FNKI, KKLT…GNLI, EDIE…ENQL, LRLP…HNKI, KSKG…HNDL, ESVP…FNSI, and SSLT…GNPI. Cysteines 255 and 288 form a disulfide. N-linked (GlcNAc...) (keratan sulfate) asparagine glycosylation occurs at asparagine 258.

This sequence belongs to the small leucine-rich proteoglycan (SLRP) family. SLRP class III subfamily. Post-translationally, contains keratan sulfate.

It is found in the secreted. Its subcellular location is the extracellular space. It localises to the extracellular matrix. In terms of biological role, induces bone formation in conjunction with TGF-beta-1 or TGF-beta-2. This chain is Mimecan (Ogn), found in Mus musculus (Mouse).